A 217-amino-acid chain; its full sequence is Adapter protein MecA (217 aa).

It belongs to the MecA family. Homodimer.

Enables the recognition and targeting of unfolded and aggregated proteins to the ClpC protease or to other proteins involved in proteolysis. This Listeria welshimeri serovar 6b (strain ATCC 35897 / DSM 20650 / CCUG 15529 / CIP 8149 / NCTC 11857 / SLCC 5334 / V8) protein is Adapter protein MecA.